The chain runs to 372 residues: Queuine tRNA-ribosyltransferase (372 aa).

Asp89 serves as the catalytic Proton acceptor. Substrate is bound by residues 89–93, Asp143, Gln185, and Gly212; that span reads DSGGF. The RNA binding stretch occupies residues 243 to 249; that stretch reads GVGKPED. The active-site Nucleophile is Asp262. The RNA binding; important for wobble base 34 recognition stretch occupies residues 267–271; sequence TRNAR. Zn(2+) is bound by residues Cys300, Cys302, Cys305, and His331.

Belongs to the queuine tRNA-ribosyltransferase family. In terms of assembly, homodimer. Within each dimer, one monomer is responsible for RNA recognition and catalysis, while the other monomer binds to the replacement base PreQ1. The cofactor is Zn(2+).

The enzyme catalyses 7-aminomethyl-7-carbaguanine + guanosine(34) in tRNA = 7-aminomethyl-7-carbaguanosine(34) in tRNA + guanine. It participates in tRNA modification; tRNA-queuosine biosynthesis. In terms of biological role, catalyzes the base-exchange of a guanine (G) residue with the queuine precursor 7-aminomethyl-7-deazaguanine (PreQ1) at position 34 (anticodon wobble position) in tRNAs with GU(N) anticodons (tRNA-Asp, -Asn, -His and -Tyr). Catalysis occurs through a double-displacement mechanism. The nucleophile active site attacks the C1' of nucleotide 34 to detach the guanine base from the RNA, forming a covalent enzyme-RNA intermediate. The proton acceptor active site deprotonates the incoming PreQ1, allowing a nucleophilic attack on the C1' of the ribose to form the product. After dissociation, two additional enzymatic reactions on the tRNA convert PreQ1 to queuine (Q), resulting in the hypermodified nucleoside queuosine (7-(((4,5-cis-dihydroxy-2-cyclopenten-1-yl)amino)methyl)-7-deazaguanosine). The chain is Queuine tRNA-ribosyltransferase from Pseudomonas aeruginosa (strain LESB58).